We begin with the raw amino-acid sequence, 600 residues long: Molybdenum cofactor biosynthesis protein moc-5 (600 aa).

The tract at residues 4-371 (RAGKKLFQWS…AVNNKKARHA (368 aa)) is molybdenum cofactor biosynthesis protein A. In terms of domain architecture, Radical SAM core spans 68–284 (MFMREHTYLR…VDKYGDGVIR (217 aa)). Arg77 is a binding site for GTP. Residues Cys84 and Cys88 each contribute to the [4Fe-4S] cluster site. Tyr90 contacts S-adenosyl-L-methionine. Residue Cys91 participates in [4Fe-4S] cluster binding. Position 127 (Arg127) interacts with GTP. An S-adenosyl-L-methionine-binding site is contributed by Gly131. Thr158 provides a ligand contact to GTP. Ser182 contacts S-adenosyl-L-methionine. GTP is bound at residue Lys218. Met252 contacts S-adenosyl-L-methionine. [4Fe-4S] cluster is bound by residues Cys316 and Cys319. A GTP-binding site is contributed by 321 to 323 (RLR). Cys333 provides a ligand contact to [4Fe-4S] cluster. The disordered stretch occupies residues 369-390 (RHAVFRNGRSEEPAKSSNDSYR). A molybdenum cofactor biosynthesis protein C region spans residues 396-595 (TSASSILVHL…SGGKTTYTID (200 aa)). Asp566 serves as the catalytic For molybdenum cofactor biosynthesis protein C activity.

The protein in the C-terminal section; belongs to the MoaC family. This sequence in the N-terminal section; belongs to the radical SAM superfamily. MoaA family. Isoform a and isoform b probably form a heterooligomer. It depends on [4Fe-4S] cluster as a cofactor.

It carries out the reaction GTP + AH2 + S-adenosyl-L-methionine = (8S)-3',8-cyclo-7,8-dihydroguanosine 5'-triphosphate + 5'-deoxyadenosine + L-methionine + A + H(+). The enzyme catalyses (8S)-3',8-cyclo-7,8-dihydroguanosine 5'-triphosphate = cyclic pyranopterin phosphate + diphosphate. It functions in the pathway cofactor biosynthesis; molybdopterin biosynthesis. Functionally, probably forms a complex with isoform b that catalyzes the conversion of 5'-GTP to cyclic pyranopterin monophosphate (cPMP). Catalyzes the cyclization of GTP to (8S)-3',8-cyclo-7,8-dihydroguanosine 5'-triphosphate and mocs1b catalyzes the subsequent conversion of (8S)-3',8-cyclo-7,8-dihydroguanosine 5'-triphosphate to cPMP. In terms of biological role, probably forms a complex with isoform a that catalyzes the conversion of 5'-GTP to cyclic pyranopterin monophosphate (cPMP). This Caenorhabditis elegans protein is Molybdenum cofactor biosynthesis protein moc-5.